Here is a 654-residue protein sequence, read N- to C-terminus: tRNA 5-methylaminomethyl-2-thiouridine biosynthesis bifunctional protein MnmC (654 aa).

Positions 1-235 (MSDFQHAQLD…KREMLGGTYQ (235 aa)) are tRNA (mnm(5)s(2)U34)-methyltransferase. The tract at residues 261–654 (VGGGLAGCAS…LRDLVRGQRG (394 aa)) is FAD-dependent cmnm(5)s(2)U34 oxidoreductase.

This sequence in the N-terminal section; belongs to the methyltransferase superfamily. tRNA (mnm(5)s(2)U34)-methyltransferase family. It in the C-terminal section; belongs to the DAO family. It depends on FAD as a cofactor.

It localises to the cytoplasm. The catalysed reaction is 5-aminomethyl-2-thiouridine(34) in tRNA + S-adenosyl-L-methionine = 5-methylaminomethyl-2-thiouridine(34) in tRNA + S-adenosyl-L-homocysteine + H(+). Functionally, catalyzes the last two steps in the biosynthesis of 5-methylaminomethyl-2-thiouridine (mnm(5)s(2)U) at the wobble position (U34) in tRNA. Catalyzes the FAD-dependent demodification of cmnm(5)s(2)U34 to nm(5)s(2)U34, followed by the transfer of a methyl group from S-adenosyl-L-methionine to nm(5)s(2)U34, to form mnm(5)s(2)U34. The protein is tRNA 5-methylaminomethyl-2-thiouridine biosynthesis bifunctional protein MnmC of Pseudomonas aeruginosa (strain UCBPP-PA14).